We begin with the raw amino-acid sequence, 204 residues long: Large ribosomal subunit protein uL18 (204 aa).

Belongs to the universal ribosomal protein uL18 family. Part of the 50S ribosomal subunit. Contacts the 5S and 23S rRNAs.

Its function is as follows. This is one of the proteins that bind and probably mediate the attachment of the 5S RNA into the large ribosomal subunit, where it forms part of the central protuberance. This is Large ribosomal subunit protein uL18 from Ignicoccus hospitalis (strain KIN4/I / DSM 18386 / JCM 14125).